We begin with the raw amino-acid sequence, 317 residues long: Methionyl-tRNA formyltransferase (317 aa).

Position 112–115 (112–115) interacts with (6S)-5,6,7,8-tetrahydrofolate; the sequence is SILP.

The protein belongs to the Fmt family.

It carries out the reaction L-methionyl-tRNA(fMet) + (6R)-10-formyltetrahydrofolate = N-formyl-L-methionyl-tRNA(fMet) + (6S)-5,6,7,8-tetrahydrofolate + H(+). In terms of biological role, attaches a formyl group to the free amino group of methionyl-tRNA(fMet). The formyl group appears to play a dual role in the initiator identity of N-formylmethionyl-tRNA by promoting its recognition by IF2 and preventing the misappropriation of this tRNA by the elongation apparatus. The polypeptide is Methionyl-tRNA formyltransferase (Mannheimia succiniciproducens (strain KCTC 0769BP / MBEL55E)).